A 742-amino-acid polypeptide reads, in one-letter code: Two-component response regulator-like PRR37 (742 aa).

Residues K63–W181 form the Response regulatory domain. The segment covering S186–G195 has biased composition (low complexity). Disordered regions lie at residues S186–K249, P290–N346, D375–N402, M478–N570, N590–M671, and N697–R742. Residues D236–T248 show a composition bias toward polar residues. Residues K299–E313 show a composition bias toward basic and acidic residues. Over residues R318–E330 the composition is skewed to polar residues. Residues R331 to E341 show a composition bias toward basic and acidic residues. Positions A380–S390 are enriched in polar residues. A compositionally biased stretch (low complexity) spans G490 to S502. A compositionally biased stretch (polar residues) spans T503–S512. Over residues N618 to S634 the composition is skewed to low complexity. Gly residues predominate over residues G656–S667. Residues R682–Q724 form the CCT domain. Residues N697–K708 are compositionally biased toward basic residues. A compositionally biased stretch (low complexity) spans G719–Q731.

It belongs to the ARR-like family.

The protein localises to the nucleus. In terms of biological role, controls photoperiodic flowering response. Seems to be one of the component of the circadian clock. Expression of several members of the ARR-like family is controlled by circadian rhythm. The particular coordinated sequential expression of PRR73, PRR37, PRR95, PRR59 and PPR1 result to circadian waves that may be at the basis of the endogenous circadian clock. This Oryza sativa subsp. indica (Rice) protein is Two-component response regulator-like PRR37 (PRR37).